We begin with the raw amino-acid sequence, 462 residues long: ATP synthase subunit beta (462 aa).

An ATP-binding site is contributed by 149–156; sequence GGAGVGKT.

The protein belongs to the ATPase alpha/beta chains family. F-type ATPases have 2 components, CF(1) - the catalytic core - and CF(0) - the membrane proton channel. CF(1) has five subunits: alpha(3), beta(3), gamma(1), delta(1), epsilon(1). CF(0) has three main subunits: a(1), b(2) and c(9-12). The alpha and beta chains form an alternating ring which encloses part of the gamma chain. CF(1) is attached to CF(0) by a central stalk formed by the gamma and epsilon chains, while a peripheral stalk is formed by the delta and b chains.

The protein resides in the cell inner membrane. It catalyses the reaction ATP + H2O + 4 H(+)(in) = ADP + phosphate + 5 H(+)(out). Its function is as follows. Produces ATP from ADP in the presence of a proton gradient across the membrane. The catalytic sites are hosted primarily by the beta subunits. This chain is ATP synthase subunit beta, found in Fusobacterium nucleatum subsp. nucleatum (strain ATCC 25586 / DSM 15643 / BCRC 10681 / CIP 101130 / JCM 8532 / KCTC 2640 / LMG 13131 / VPI 4355).